The following is a 269-amino-acid chain: LOB domain-containing protein 6 (269 aa).

The LOB domain occupies Ser-37 to Leu-138.

This sequence belongs to the LOB domain-containing protein family.

The protein resides in the nucleus. Its function is as follows. Negative regulator of cell proliferation in the adaxial side of leaves. Regulates the formation of a symmetric lamina and the establishment of venation. The sequence is that of LOB domain-containing protein 6 (LBD6) from Oryza sativa subsp. indica (Rice).